Consider the following 196-residue polypeptide: Cyclin-dependent kinase inhibitor 6 (196 aa).

Disordered regions lie at residues Met1 to His36 and Ala55 to Pro151. The span at Ser124–Ala139 shows a compositional bias: low complexity. The residue at position 152 (Thr152) is a Phosphothreonine; by KIN10.

The protein belongs to the CDI family. ICK/KRP subfamily. As to quaternary structure, specifically interacts with CDKA-1, but not with CDKB1-1. Interacts with CYCD1-1, CYCD4-1 and RHF1A. Binds to FBL17. Interacts with KIN10. Interacts with CYCD3-1. In terms of processing, ubiquitinated by RHF1A and SCF(FBL17). Ubiquitination leads to its subsequent degradation, thus controlling cell cycle progression. The phosphorylation at Thr-152 by KIN10 represses its activity. As to expression, expressed in newly formed organs such as the shoot apex. Expressed in cotyledon, primary root and marginal region of the leaves as well as in developing pollen.

The protein resides in the nucleus. Its subcellular location is the nucleoplasm. Its activity is regulated as follows. Down-regulated by KIN10 under a phosphorylation-dependent manner. Binds and inhibits CYCD2-1/CDKA-1 complex kinase activity. Regulates cell division which is crucial for plant growth, development and morphogenesis. May inhibit CDK kinases specifically involved in the G1/S phase transition. The polypeptide is Cyclin-dependent kinase inhibitor 6 (KRP6) (Arabidopsis thaliana (Mouse-ear cress)).